The chain runs to 208 residues: Uracil phosphoribosyltransferase (208 aa).

5-phospho-alpha-D-ribose 1-diphosphate contacts are provided by residues R78, R103, and 130 to 138 (DPMLATGGT). Uracil contacts are provided by residues I193 and 198 to 200 (GDA). D199 contacts 5-phospho-alpha-D-ribose 1-diphosphate.

Belongs to the UPRTase family. Mg(2+) is required as a cofactor.

It carries out the reaction UMP + diphosphate = 5-phospho-alpha-D-ribose 1-diphosphate + uracil. It functions in the pathway pyrimidine metabolism; UMP biosynthesis via salvage pathway; UMP from uracil: step 1/1. With respect to regulation, allosterically activated by GTP. Functionally, catalyzes the conversion of uracil and 5-phospho-alpha-D-ribose 1-diphosphate (PRPP) to UMP and diphosphate. This chain is Uracil phosphoribosyltransferase, found in Oleidesulfovibrio alaskensis (strain ATCC BAA-1058 / DSM 17464 / G20) (Desulfovibrio alaskensis).